The sequence spans 160 residues: D-aminoacyl-tRNA deacylase 2 (160 aa).

The Gly-transPro motif, allows the protein to recognize chirality of D-amino acids motif lies at 152-153 (GP).

This sequence belongs to the DTD family. Homodimer.

The protein resides in the cytoplasm. It carries out the reaction a D-aminoacyl-tRNA + H2O = a tRNA + a D-alpha-amino acid + H(+). The enzyme catalyses glycyl-tRNA(Ala) + H2O = tRNA(Ala) + glycine + H(+). The catalysed reaction is D-tyrosyl-tRNA(Tyr) + H2O = D-tyrosine + tRNA(Tyr). It catalyses the reaction L-alanyl-tRNA(Thr) + H2O = tRNA(Thr) + L-alanine + H(+). Functionally, deacylates mischarged D-aminoacyl-tRNAs. Also deacylates mischarged glycyl-tRNA(Ala), protecting cells against glycine mischarging by AlaRS. Probably acts by rejecting L-amino acids from its binding site rather than specific recognition of D-amino acids. Catalyzes the hydrolysis of D-tyrosyl-tRNA(Tyr), has no activity on correctly charged L-tyrosyl-tRNA(Tyr). By recycling D-aminoacyl-tRNA to D-amino acids and free tRNA molecules, this enzyme counteracts the toxicity associated with the formation of D-aminoacyl-tRNA entities in vivo and helps enforce protein L-homochirality. In contrast to DTD1, deacylates L-Ala mischarged on tRNA(Thr)(G4.U69) by alanine-tRNA ligase AARS. Can deacylate L-Ala due to a relaxed specificity for substrate chirality caused by the trans conformation of the Gly-Pro motif in the active site. Also hydrolyzes correctly charged, achiral, glycyl-tRNA(Gly) in vitro, although in vivo eef1a1a/EF-Tu may protect cognate achiral glycyl-tRNA(Gly) from DTD2-mediated deacetylation. The polypeptide is D-aminoacyl-tRNA deacylase 2 (dtd2) (Danio rerio (Zebrafish)).